A 285-amino-acid chain; its full sequence is Pantothenate synthetase (285 aa).

30–37 is a binding site for ATP; the sequence is MGYLHAGH. The Proton donor role is filled by histidine 37. Glutamine 61 is a binding site for (R)-pantoate. Residue glutamine 61 coordinates beta-alanine. Residue 147–150 participates in ATP binding; the sequence is GQKD. Position 153 (glutamine 153) interacts with (R)-pantoate. ATP-binding positions include valine 176 and 184–187; that span reads LSSR.

Belongs to the pantothenate synthetase family. In terms of assembly, homodimer.

It is found in the cytoplasm. It catalyses the reaction (R)-pantoate + beta-alanine + ATP = (R)-pantothenate + AMP + diphosphate + H(+). It participates in cofactor biosynthesis; (R)-pantothenate biosynthesis; (R)-pantothenate from (R)-pantoate and beta-alanine: step 1/1. Functionally, catalyzes the condensation of pantoate with beta-alanine in an ATP-dependent reaction via a pantoyl-adenylate intermediate. The polypeptide is Pantothenate synthetase (Solidesulfovibrio magneticus (strain ATCC 700980 / DSM 13731 / RS-1) (Desulfovibrio magneticus)).